Reading from the N-terminus, the 663-residue chain is DNA topoisomerase 4 subunit B (663 aa).

ATP is bound by residues tyrosine 21, asparagine 61, aspartate 88, 130 to 136 (GLHGVGI), and lysine 360. The Toprim domain maps to 440–554 (TELFIVEGDS…EGHLYLAKPP (115 aa)). Mg(2+) is bound by residues glutamate 446, aspartate 519, and aspartate 521.

This sequence belongs to the type II topoisomerase family. ParE type 1 subfamily. As to quaternary structure, heterotetramer composed of ParC and ParE. It depends on Mg(2+) as a cofactor. Requires Mn(2+) as cofactor. Ca(2+) is required as a cofactor.

It catalyses the reaction ATP-dependent breakage, passage and rejoining of double-stranded DNA.. In terms of biological role, topoisomerase IV is essential for chromosome segregation. It relaxes supercoiled DNA. Performs the decatenation events required during the replication of a circular DNA molecule. This is DNA topoisomerase 4 subunit B from Rickettsia typhi (strain ATCC VR-144 / Wilmington).